Here is a 450-residue protein sequence, read N- to C-terminus: Probable glycine dehydrogenase (decarboxylating) subunit 1 (450 aa).

This sequence belongs to the GcvP family. N-terminal subunit subfamily. As to quaternary structure, the glycine cleavage system is composed of four proteins: P, T, L and H. In this organism, the P 'protein' is a heterodimer of two subunits.

The catalysed reaction is N(6)-[(R)-lipoyl]-L-lysyl-[glycine-cleavage complex H protein] + glycine + H(+) = N(6)-[(R)-S(8)-aminomethyldihydrolipoyl]-L-lysyl-[glycine-cleavage complex H protein] + CO2. Its function is as follows. The glycine cleavage system catalyzes the degradation of glycine. The P protein binds the alpha-amino group of glycine through its pyridoxal phosphate cofactor; CO(2) is released and the remaining methylamine moiety is then transferred to the lipoamide cofactor of the H protein. The polypeptide is Probable glycine dehydrogenase (decarboxylating) subunit 1 (Staphylococcus haemolyticus (strain JCSC1435)).